A 326-amino-acid polypeptide reads, in one-letter code: Aldo-keto reductase family 1 member D1 (326 aa).

NADP(+)-binding positions include 22–26 (GLGTY) and Asp-53. Tyr-26 contributes to the substrate binding site. 4 residues coordinate substrate: Tyr-58, Trp-89, Glu-120, and Tyr-132. The active-site Proton donor is Tyr-58. NADP(+) is bound by residues 169–170 (SN), Gln-193, and 219–224 (YSPLGT). Residue Trp-230 coordinates substrate. Residue 273–283 (KSFNPERIKEN) coordinates NADP(+).

The protein belongs to the aldo/keto reductase family.

The protein resides in the cytoplasm. It carries out the reaction 5beta-cholestan-3-one + NADP(+) = cholest-4-en-3-one + NADPH + H(+). The catalysed reaction is 4,5beta-dihydrocortisone + NADP(+) = cortisone + NADPH + H(+). The enzyme catalyses cortisol + NADPH + H(+) = 5beta-dihydrocortisol + NADP(+). It catalyses the reaction corticosterone + NADPH + H(+) = 5beta-dihydrocorticosterone + NADP(+). It carries out the reaction 7alpha,12alpha-dihydroxycholest-4-en-3-one + NADPH + H(+) = 7alpha,12alpha-dihydroxy-5beta-cholestan-3-one + NADP(+). The catalysed reaction is 7alpha-hydroxycholest-4-en-3-one + NADPH + H(+) = 7alpha-hydroxy-5beta-cholestan-3-one + NADP(+). The enzyme catalyses epitestosterone + NADPH + H(+) = 5beta-dihydroepitestosterone + NADP(+). It catalyses the reaction androst-4-ene-3,17-dione + NADPH + H(+) = 5beta-androstane-3,17-dione + NADP(+). It carries out the reaction progesterone + NADPH + H(+) = 5beta-pregnan-3,20-dione + NADP(+). The catalysed reaction is 21-hydroxyprogesterone + NADPH + H(+) = 5beta-dihydrodeoxycorticosterone + NADP(+). The enzyme catalyses aldosterone + NADPH + H(+) = 5beta-dihydroaldosterone + NADP(+). It catalyses the reaction 17beta-hydroxyandrosta-1,4-dien-3-one + NADPH + H(+) = 17beta-hydroxy-5beta-androst-1-en-3-one + NADP(+). It carries out the reaction 17beta-hydroxyestr-4-en-3-one + NADPH + H(+) = 17beta-hydroxy-5beta-estran-3-one + NADP(+). The catalysed reaction is 5beta-dihydrotestosterone + NADP(+) = testosterone + NADPH + H(+). The enzyme catalyses androst-4-ene-3,11,17-trione + NADPH + H(+) = 17beta-hydroxyandrost-4-ene-3,11-dione + NADP(+). With respect to regulation, subject to inhibition by high substrate concentrations. Inhibited by testosterone concentrations above 10 uM. Inhibited by the primary and secondary bile acids chenodeoxycholic acid and ursodeoxycholic acid. Catalyzes the stereospecific NADPH-dependent reduction of the C4-C5 double bond of bile acid intermediates and steroid hormones carrying a delta(4)-3-one structure to yield an A/B cis-ring junction. This cis-configuration is crucial for bile acid biosynthesis and plays important roles in steroid metabolism. Capable of reducing a broad range of delta-(4)-3-ketosteroids from C18 (such as, 17beta-hydroxyestr-4-en-3-one) to C27 (such as, 7alpha-hydroxycholest-4-en-3-one). The chain is Aldo-keto reductase family 1 member D1 (AKR1D1) from Oryctolagus cuniculus (Rabbit).